Here is a 447-residue protein sequence, read N- to C-terminus: GTPase Der (447 aa).

EngA-type G domains lie at 3–167 and 181–354; these read PVIA…VQER and VKIA…AAAM. GTP is bound by residues 9–16, 56–60, 119–122, 187–194, 234–238, and 299–302; these read GRPNVGKS, DTGGF, NKAE, DTAGL, and NKWD. One can recognise a KH-like domain in the interval 355-439; it reads VKLPTPQLTR…PLRIEFRTNK (85 aa).

It belongs to the TRAFAC class TrmE-Era-EngA-EngB-Septin-like GTPase superfamily. EngA (Der) GTPase family. As to quaternary structure, associates with the 50S ribosomal subunit.

Its function is as follows. GTPase that plays an essential role in the late steps of ribosome biogenesis. This is GTPase Der from Cupriavidus pinatubonensis (strain JMP 134 / LMG 1197) (Cupriavidus necator (strain JMP 134)).